A 1860-amino-acid polypeptide reads, in one-letter code: Collagen alpha-1(XXVII) chain (1860 aa).

The signal sequence occupies residues 1–41; the sequence is MGAGSARGARGTAAAAAARGGGFLFSWILVSFACHLASTQG. The propeptide at 42-624 is N-terminal propeptide; it reads APEDVDILQR…AGSTPFPLLM (583 aa). The Laminin G-like domain occupies 71–236; that stretch reads QSGFIFTQRA…NYCTHLRKQC (166 aa). The N-linked (GlcNAc...) asparagine glycan is linked to N271. Disordered stretches follow at residues 278 to 608, 625 to 772, and 851 to 1625; these read ALGS…TSSG, GPPG…GSDG, and LKGD…IQLQ. Polar residues-rich tracts occupy residues 298 to 309 and 386 to 409; these read TKPQRTSPTNPH and HPTQ…QVPP. Over residues 432 to 445 the composition is skewed to pro residues; that stretch reads MPRPPPPSTRPLPP. Low complexity-rich tracts occupy residues 446-457 and 485-505; these read TTSSSKKPIPTL and TALS…RPPA. The span at 509–518 shows a compositional bias: polar residues; that stretch reads PPTSGTSTPR. Composition is skewed to low complexity over residues 572–588 and 599–608; these read TTRP…QTTP and SSSPRPTSSG. Collagen-like domains follow at residues 625–679, 688–747, 748–807, 808–867, 871–930, 931–990, 1003–1062, 1066–1125, 1126–1185, 1192–1251, 1258–1317, 1318–1378, 1382–1441, 1442–1501, 1502–1561, and 1562–1621; these read GPPG…GDPG, GAKG…PGPV, GDPG…DGNP, GELG…SGDP, GDKG…KGKP, GARG…PGPV, GEPG…RGAK, GPRG…PGTK, GLPG…IGQR, GDSG…QGEK, GAKG…KGIV, GPLG…RGKP, GQPG…EGIA, GPDG…PGQL, GPPG…QGPR, and GPPG…PGGP. The tract at residues 625–1618 is triple-helical region; it reads GPPGPKGDCG…RGRPGPPGPP (994 aa). Residues 654-669 show a composition bias toward pro residues; sequence RGPPGPYGNPGLPGPP. A compositionally biased stretch (low complexity) spans 714–734; it reads PGPAGHPGEQGQPGPEGSPGA. 2 stretches are compositionally biased toward low complexity: residues 911-924 and 932-944; these read FPGD…NGPE and ARGL…QLGP. The span at 1033–1042 shows a compositional bias: gly residues; sequence GMPGGMGTPG. Residues 1043–1053 are compositionally biased toward pro residues; sequence EPGPQGPPGSR. The span at 1130-1142 shows a compositional bias: pro residues; that stretch reads EPGPQGPQGPIGP. 2 stretches are compositionally biased toward basic and acidic residues: residues 1202–1220 and 1241–1253; these read LKGD…EKGQ and PEGK…EKGR. Composition is skewed to basic and acidic residues over residues 1326–1338 and 1350–1360; these read KGEK…DGKA and PVGDRGDRGEP. The segment covering 1449–1458 has biased composition (low complexity); the sequence is RDGQAGQQGE. Low complexity predominate over residues 1572-1587; it reads IVGPLGILGPSGLPGP. Pro residues predominate over residues 1603 to 1620; sequence RGPPGPRGRPGPPGPPGG. The propeptide at 1622-1860 is C-terminal propeptide; it reads IQLQQDDLGA…RLEVGPACFL (239 aa). One can recognise a Fibrillar collagen NC1 domain in the interval 1660 to 1860; the sequence is GEIFKTLHYL…RLEVGPACFL (201 aa). 3 disulfides stabilise this stretch: C1690-C1722, C1731-C1858, and C1767-C1811. Ca(2+) contacts are provided by D1708, N1710, C1713, and D1716. N1769 carries an N-linked (GlcNAc...) asparagine glycan.

This sequence belongs to the fibrillar collagen family.

It localises to the secreted. The protein localises to the extracellular space. It is found in the extracellular matrix. In terms of biological role, plays a role during the calcification of cartilage and the transition of cartilage to bone. The chain is Collagen alpha-1(XXVII) chain (COL27A1) from Homo sapiens (Human).